The primary structure comprises 378 residues: Putative F-box/kelch-repeat protein At3g43710 (378 aa).

In terms of domain architecture, F-box spans Thr-23–Arg-69. Kelch repeat units lie at residues Asn-130 to Gly-176, Ile-178 to Gly-227, and Ser-262 to Lys-308.

In Arabidopsis thaliana (Mouse-ear cress), this protein is Putative F-box/kelch-repeat protein At3g43710.